Consider the following 68-residue polypeptide: Peptide Smp13 (68 aa).

A signal peptide spans 1 to 23 (MKTQFAIFLITLVLFQMFSQSDA). Phe36 is subject to Phenylalanine amide. Residues 37–68 (GKRGLGDHDDLDELFDGEISQADIDFLKEIMQ) constitute a propeptide that is removed on maturation.

This sequence belongs to the non-disulfide-bridged peptide (NDBP) superfamily. Short antimicrobial peptide (group 4) family. As to expression, expressed by the venom gland.

The protein localises to the secreted. Its function is as follows. Peptide with unknown function. Does not show antimicrobial activity against the Gram-positive, and Gram-negative bacteria tested, as well as against the fungus C.albicans. The protein is Peptide Smp13 of Scorpio palmatus (Israeli golden scorpion).